Consider the following 128-residue polypeptide: uncharacterized protein (128 aa).

A disordered region spans residues 24–43; it reads KRTQNNTEQASRAINSPLQS. Residues 26–43 are compositionally biased toward polar residues; it reads TQNNTEQASRAINSPLQS.

This is an uncharacterized protein from Homo sapiens (Human).